The following is a 2561-amino-acid chain: Squalestatin hexaketide synthase (2561 aa).

The interval 1–77 (MDVSKEEGQR…NGTTNITPEF (77 aa)) is disordered. Low complexity predominate over residues 20–74 (NETTNGHTNGYTNGHTNGHTNGTTNATTNGTTNGTMNGTTNGTTNRTTNGTTNIT). One can recognise a Ketosynthase family 3 (KS3) domain in the interval 83–503 (QVPVAICGIG…GSNTHIIIDS (421 aa)). Residues cysteine 253, histidine 390, and histidine 427 each act as for beta-ketoacyl synthase activity in the active site. The segment at 603-925 (FIFTGQGAQW…LEAIGKLFCF (323 aa)) is malonyl-CoA:ACP transacylase (MAT) domain. The interval 972–1101 (HELLGERSLE…GLVTASVVIS (130 aa)) is N-terminal hotdog fold. The interval 972–1253 (HELLGERSLE…RGFKCKRTDE (282 aa)) is dehydratase (DH) domain. The PKS/mFAS DH domain maps to 972–1257 (HELLGERSLE…CKRTDESFIQ (286 aa)). The active-site Proton acceptor; for dehydratase activity is histidine 1004. The C-terminal hotdog fold stretch occupies residues 1112–1257 (TFPRKVDTSR…CKRTDESFIQ (146 aa)). Aspartate 1174 (proton donor; for dehydratase activity) is an active-site residue. The interval 1421-1599 (SFFQAAGLNK…GFEGAGTVVL (179 aa)) is methyltransferase (CMet) domain. Residues 1826–2146 (GMLNTLHWVG…RGVHMGRIVV (321 aa)) are enoyl reductase (ER) (ER) domain. A ketoreductase (KR) domain region spans residues 2170–2343 (STYLLTGGMG…PASVIDIAAI (174 aa)). One can recognise a Carrier domain in the interval 2472–2550 (VLFAQEIAKR…SLGRLATKRL (79 aa)). At serine 2509 the chain carries O-(pantetheine 4'-phosphoryl)serine.

Its pathway is secondary metabolite biosynthesis. Highly reducing polyketide synthase (HR-PKS); part of the gene cluster that mediates the biosynthesis of squalestatin S1 (SQS1, also known as zaragozic acid A), a heavily oxidized fungal polyketide that offers potent cholesterol lowering activity by targeting squalene synthase (SS). SQS1 is composed of a 2,8-dioxobicyclic[3.2.1]octane-3,4,5-tricarboxyclic acid core that is connected to two lipophilic polyketide arms. These initial steps feature the priming of an unusual benzoic acid starter unit onto the highly reducing polyketide synthase pks2, followed by oxaloacetate extension and product release to generate a tricarboxylic acid containing product. The phenylalanine ammonia lyase (PAL) M7 and the acyl-CoA ligase M9 are involved in transforming phenylalanine into benzoyl-CoA. The citrate synthase-like protein R3 is involved in connecting the C-alpha-carbons of the hexaketide chain and oxaloacetate to afford the tricarboxylic acid unit. The potential hydrolytic enzymes, M8 and M10, are in close proximity to pks2 and may participate in product release. On the other side, the tetraketide arm is synthesized by a the squalestatin tetraketide synthase pks1 and enzymatically esterified to the core in the last biosynthetic step, by the acetyltransferase M4. The biosynthesis of the tetraketide must involve 3 rounds of chain extension. After the first and second rounds methyl-transfer occurs, and in all rounds of extension the ketoreductase and dehydratase are active. The enoyl reductase and C-MeT of pks1 are not active in the final round of extension. The acetyltransferase M4 appears to have a broad substrate selectivity for its acyl CoA substrate, allowing the in vitro synthesis of novel squalestatins. The biosynthesis of SQS1 requires several oxidative steps likely performed by oxidoreductases M1, R1 and R2. Finally, in support of the identification of the cluster as being responsible for SQS1 production, the cluster contains a gene encoding a putative squalene synthase (SS) R6, suggesting a likely mechanism for self-resistance. This chain is Squalestatin hexaketide synthase, found in Phoma sp. (strain ATCC 20986 / MF5453).